A 409-amino-acid chain; its full sequence is Lissencephaly-1 homolog (409 aa).

One can recognise a LisH domain in the interval 7–39; that stretch reads QKEELNKAIADYLHQCGFEDTLNAFKQDANMPG. The stretch at 54–80 forms a coiled coil; that stretch reads TSVIRLQKKVMDLETRLSEAEKEVHHG. The tract at residues 72–95 is disordered; that stretch reads EAEKEVHHGGGPKKTRSPEDWIPR. WD repeat units lie at residues 104–145, 146–187, 188–229, 231–269, 272–332, 335–374, and 377–409; these read GHRS…RTLK, GHTD…RTLH, GHDH…KTFQ, HGEW…CKCD, DHDH…CLVT, GHDN…CAKT, and AHEH…WECR.

Belongs to the WD repeat LIS1/nudF family.

It is found in the cytoplasm. The protein localises to the cytoskeleton. It localises to the microtubule organizing center. Its subcellular location is the centrosome. In terms of biological role, positively regulates the activity of the minus-end directed microtubule motor protein dynein. May enhance dynein-mediated microtubule sliding by targeting dynein to the microtubule plus end. Required for several dynein- and microtubule-dependent processes. The protein is Lissencephaly-1 homolog of Nematostella vectensis (Starlet sea anemone).